Here is a 460-residue protein sequence, read N- to C-terminus: Probable Xaa-Pro aminopeptidase VDBG_02538 (460 aa).

Mn(2+)-binding residues include D256, D267, E390, and E430.

It belongs to the peptidase M24B family. Mn(2+) is required as a cofactor.

It catalyses the reaction Release of any N-terminal amino acid, including proline, that is linked to proline, even from a dipeptide or tripeptide.. Catalyzes the removal of a penultimate prolyl residue from the N-termini of peptides. This is Probable Xaa-Pro aminopeptidase VDBG_02538 from Verticillium alfalfae (strain VaMs.102 / ATCC MYA-4576 / FGSC 10136) (Verticillium wilt of alfalfa).